Consider the following 171-residue polypeptide: Large ribosomal subunit protein bL9 (171 aa).

The protein belongs to the bacterial ribosomal protein bL9 family.

Binds to the 23S rRNA. The protein is Large ribosomal subunit protein bL9 of Rickettsia akari (strain Hartford).